The sequence spans 355 residues: Peptide chain release factor 1 (355 aa).

Glutamine 231 is modified (N5-methylglutamine). Residues 280 to 291 (SERLAKESEARK) are compositionally biased toward basic and acidic residues. The segment at 280–303 (SERLAKESEARKSQVGSGDRSERI) is disordered.

This sequence belongs to the prokaryotic/mitochondrial release factor family. In terms of processing, methylated by PrmC. Methylation increases the termination efficiency of RF1.

The protein localises to the cytoplasm. Functionally, peptide chain release factor 1 directs the termination of translation in response to the peptide chain termination codons UAG and UAA. The protein is Peptide chain release factor 1 of Campylobacter jejuni subsp. jejuni serotype O:2 (strain ATCC 700819 / NCTC 11168).